Consider the following 126-residue polypeptide: Protein ApaG (126 aa).

The ApaG domain occupies 2 to 126 (SDPRYQIDVS…FRLAVPGALH (125 aa)).

This is Protein ApaG from Pseudomonas fluorescens (strain SBW25).